We begin with the raw amino-acid sequence, 1247 residues long: Clustered mitochondria protein homolog (1247 aa).

Residues Met1 to Asp43 form a disordered region. Residues Gly30 to Ser39 are compositionally biased toward polar residues. The 251-residue stretch at Ser329–Leu579 folds into the Clu domain. The segment at Gly1222 to Asp1247 is disordered.

The protein belongs to the CLU family.

The protein resides in the cytoplasm. Functionally, mRNA-binding protein involved in proper cytoplasmic distribution of mitochondria. The sequence is that of Clustered mitochondria protein homolog from Caenorhabditis elegans.